The following is a 687-amino-acid chain: MMFRDQVGILASWFKGWNECEQTVALLSLLKRVTRTQARFLQLCLEHSLADCNDIHLLESEANSAAIVSQWQQESKEKVVSLLLSHLPLLQPGNTEAKSEYMRLLQKVLAYSIESNAFIEESRQLLSYALIHPATTLEDRNALALWLSHLEERLASGFRTRPEPSYHSRQGSDEWGGPAELAPGEAGPGWQDKPPRENGHVPFHPSSSVPPAINSIGSNANTGLPCQIHPSPLKRSMSLIPTSPQAPGEWPSPEELGARAAFTTPDHAPLSPQSSVASSGSEQTEEQGSSRNTFQEDGSGMKDVPSWLKSLRLHKYAALFSQMSYEEMMTLTEQHLESQNVTKGARHKIALSIQKLRERQSVLKSLEKDVLEGGNLWNALQELQQIIITPIKAYSVLQATPTAKDEGRGEPLLPGAEPPLTHPGSDKGTEAKDPPAAENYPPPPAPAPSDSSEPAPAPVADGDIPSQFTRVMGKVCTQLLVSRPDEENITSYLQLIEKCLTHEAFTETQKKRLLSWKQQVLKLLRTFPRKAALDMQSYRQQKGWAFGSNSLPIAGSVGMGVARRTQRQFPMPPRALPPGRMGLLSPSGIGGVSPRHALTSPSLGGQGRQNLWFANPGGSNSMPSQSRSSVQRTHSLPVHSSPQAILMFPPDCPVPGPDLEINPTLESLCLSMTEHALGDGTDKTSTI.

The segment covering 160–172 (TRPEPSYHSRQGS) has biased composition (basic and acidic residues). Residues 160–301 (TRPEPSYHSR…NTFQEDGSGM (142 aa)) form a disordered region. Residue Ser-172 is modified to Phosphoserine. Composition is skewed to low complexity over residues 175–190 (WGGPAELAPGEAGPGW) and 200–211 (HVPFHPSSSVPP). The span at 215 to 224 (SIGSNANTGL) shows a compositional bias: polar residues. Phosphoserine is present on residues Ser-271, Ser-278, Ser-279, and Ser-281. Over residues 278 to 290 (SSGSEQTEEQGSS) the composition is skewed to low complexity. The region spanning 299–372 (SGMKDVPSWL…LKSLEKDVLE (74 aa)) is the SAM domain. Thr-400 carries the post-translational modification Phosphothreonine. The segment at 402–464 (TAKDEGRGEP…APAPVADGDI (63 aa)) is disordered. Residues 424–435 (GSDKGTEAKDPP) show a composition bias toward basic and acidic residues. Residues 448–461 (PSDSSEPAPAPVAD) show a composition bias toward low complexity. Residues Ser-548, Ser-550, Ser-556, Ser-585, and Ser-593 each carry the phosphoserine modification. Arg-595 carries the post-translational modification Asymmetric dimethylarginine. The segment at 600–636 (SPSLGGQGRQNLWFANPGGSNSMPSQSRSSVQRTHSL) is disordered. A compositionally biased stretch (polar residues) spans 617-636 (GGSNSMPSQSRSSVQRTHSL). The residue at position 621 (Ser-621) is a Phosphoserine.

This sequence belongs to the SMAUG family.

It localises to the cytoplasm. Its subcellular location is the nucleus. In terms of biological role, has transcriptional repressor activity. Overexpression inhibits the transcriptional activities of AP-1, p53/TP53 and CDKN1A. This chain is Protein Smaug homolog 2 (Samd4b), found in Mus musculus (Mouse).